We begin with the raw amino-acid sequence, 359 residues long: Peptide chain release factor 1 (359 aa).

N5-methylglutamine is present on Q238.

The protein belongs to the prokaryotic/mitochondrial release factor family. Methylated by PrmC. Methylation increases the termination efficiency of RF1.

The protein resides in the cytoplasm. Its function is as follows. Peptide chain release factor 1 directs the termination of translation in response to the peptide chain termination codons UAG and UAA. The sequence is that of Peptide chain release factor 1 from Rhodococcus jostii (strain RHA1).